Reading from the N-terminus, the 397-residue chain is Phosphoglycerate kinase (397 aa).

Substrate is bound by residues 26-28 (DLN), arginine 42, 65-68 (HLGR), arginine 119, and arginine 152. ATP is bound by residues lysine 203, glutamate 325, and 351–354 (GGDT).

The protein belongs to the phosphoglycerate kinase family. Monomer.

The protein resides in the cytoplasm. It carries out the reaction (2R)-3-phosphoglycerate + ATP = (2R)-3-phospho-glyceroyl phosphate + ADP. It functions in the pathway carbohydrate degradation; glycolysis; pyruvate from D-glyceraldehyde 3-phosphate: step 2/5. This chain is Phosphoglycerate kinase, found in Bordetella pertussis (strain Tohama I / ATCC BAA-589 / NCTC 13251).